A 471-amino-acid polypeptide reads, in one-letter code: Monocarboxylate transporter 11 (471 aa).

Positions 1 to 13 (MPAPQRKHRRGGF) are enriched in basic residues. The interval 1–31 (MPAPQRKHRRGGFSHRCFPTPQTAMTPQPAG) is disordered. Residues 1 to 35 (MPAPQRKHRRGGFSHRCFPTPQTAMTPQPAGPPDG) are Cytoplasmic-facing. The span at 19–28 (PTPQTAMTPQ) shows a compositional bias: low complexity. Transmembrane regions (helical) follow at residues 36–56 (GWGW…YGLL), 78–98 (AWIS…GSAL), 106–126 (PVVM…AFAS), 131–151 (LYLG…APAL), 163–183 (VLAV…LAPA), 198–218 (LLLG…LPLV), 243–263 (AFSI…VPYV), 273–293 (GLGG…DAGA), 312–332 (LAVF…VPVV), 333–353 (GGEE…GLSA), 367–389 (LVGV…LGGL), and 407–427 (ASFL…IGLP). Residues 428–471 (RALPSCGPASPPATPPPETGELLPAPQAVLLSPGGPGSTLDTTC) lie on the Cytoplasmic side of the membrane.

It belongs to the major facilitator superfamily. Monocarboxylate porter (TC 2.A.1.13) family. In terms of assembly, interacts with isoform 2 of BSG. As to expression, expressed in liver, salivary gland and thyroid.

The protein resides in the endoplasmic reticulum membrane. It is found in the cell membrane. It catalyses the reaction pyruvate(out) + H(+)(out) = pyruvate(in) + H(+)(in). Its function is as follows. Proton-linked monocarboxylate transporter. It catalyzes the transport of pyruvate across the plasma membrane. Probably involved in hepatic lipid metabolism: overexpression results in an increase of triacylglycerol(TAG) levels, small increases in intracellular diacylglycerols and decreases in lysophosphatidylcholine, cholesterol ester and sphingomyelin lipids. In Homo sapiens (Human), this protein is Monocarboxylate transporter 11 (SLC16A11).